We begin with the raw amino-acid sequence, 656 residues long: CXXC-type zinc finger protein 1 (656 aa).

N-acetylmethionine is present on methionine 1. Residues 1-14 are compositionally biased toward acidic residues; sequence MEGDGSDPEPPDAG. A disordered region spans residues 1 to 20; it reads MEGDGSDPEPPDAGEDSKSE. Phosphoserine is present on residues serine 6 and serine 19. The PHD-type zinc-finger motif lies at 28-76; sequence YCICRKPDINCFMIGCDNCNEWFHGDCIRITEKMAKAIREWYCRECREK. Residues 84 to 162 form a disordered region; sequence YRHKKSRERD…QHHQQQQQQI (79 aa). Residues 90 to 120 are compositionally biased toward basic and acidic residues; sequence RERDGNERDSSEPRDEGGGRKRPVPDPDLQR. Serine 124 carries the post-translational modification Phosphoserine. Residues 160-209 form a CXXC-type zinc finger; it reads QQIKRSARMCGECEACRRTEDCGHCDFCRDMKKFGGPNKIRQKCRLRQCQ. Zn(2+) contacts are provided by cysteine 169, cysteine 172, cysteine 175, cysteine 181, cysteine 184, cysteine 187, cysteine 203, and cysteine 208. 2 disordered regions span residues 219 to 287 and 311 to 373; these read FPSS…LPLD and EESP…ASLP. A Phosphoserine modification is found at serine 224. Threonine 227 is modified (phosphothreonine). A compositionally biased stretch (low complexity) spans 239 to 249; sequence LPTQQQPQPSQ. A Glycyl lysine isopeptide (Lys-Gly) (interchain with G-Cter in SUMO2) cross-link involves residue lysine 250. The span at 321 to 334 shows a compositional bias: basic residues; the sequence is RKRAVKVKHVKRRE. The span at 335 to 345 shows a compositional bias: basic and acidic residues; sequence KKSEKKKEERY. Residues 346–358 show a composition bias toward basic residues; it reads KRHRQKQKHKDKW. Residues 359–368 show a composition bias toward basic and acidic residues; that stretch reads KHPERADAKD. Residues 422–474 are a coiled coil; that stretch reads AEEHGKKLLERIRREQQSARTRLQEMERRFHELEAIILRAKQQAVREDEESNE.

As to quaternary structure, component of the SET1 complex, at least composed of the catalytic subunit (SETD1A or SETD1B), WDR5, WDR82, RBBP5, ASH2L/ASH2, CXXC1/CFP1 HCFC1 and DPY30. Interacts with SETD1A. Interacts with ZNF335. Interacts with PRDM9; this interaction does not link PRDM9-activated recombination hotspot sites with DSB machinery and is not required for the hotspot recognition pathway. Interacts with histone H3K4me3. In terms of processing, may be regulated by proteolysis. Ubiquitous.

The protein localises to the nucleus speckle. The protein resides in the nucleus. Its function is as follows. Transcriptional activator that exhibits a unique DNA binding specificity for CpG unmethylated motifs with a preference for CpGG. This Homo sapiens (Human) protein is CXXC-type zinc finger protein 1 (CXXC1).